A 277-amino-acid polypeptide reads, in one-letter code: Large ribosomal subunit protein uL2 (277 aa).

2 disordered regions span residues lysine 37–histidine 60 and valine 223–aspartate 265. Residues serine 39–isoleucine 49 show a composition bias toward polar residues. Basic residues predominate over residues threonine 50–histidine 60. Residues aspartate 229–glutamate 244 show a composition bias toward basic and acidic residues.

The protein belongs to the universal ribosomal protein uL2 family. In terms of assembly, part of the 50S ribosomal subunit. Forms a bridge to the 30S subunit in the 70S ribosome.

In terms of biological role, one of the primary rRNA binding proteins. Required for association of the 30S and 50S subunits to form the 70S ribosome, for tRNA binding and peptide bond formation. It has been suggested to have peptidyltransferase activity; this is somewhat controversial. Makes several contacts with the 16S rRNA in the 70S ribosome. This Neisseria meningitidis serogroup C (strain 053442) protein is Large ribosomal subunit protein uL2.